A 316-amino-acid polypeptide reads, in one-letter code: Beta-ketoacyl-[acyl-carrier-protein] synthase III (316 aa).

Active-site residues include cysteine 112 and histidine 243. The tract at residues 244 to 248 (QANIR) is ACP-binding. Asparagine 273 is an active-site residue.

The protein belongs to the thiolase-like superfamily. FabH family. Homodimer.

The protein localises to the cytoplasm. It carries out the reaction malonyl-[ACP] + acetyl-CoA + H(+) = 3-oxobutanoyl-[ACP] + CO2 + CoA. The protein operates within lipid metabolism; fatty acid biosynthesis. Catalyzes the condensation reaction of fatty acid synthesis by the addition to an acyl acceptor of two carbons from malonyl-ACP. Catalyzes the first condensation reaction which initiates fatty acid synthesis and may therefore play a role in governing the total rate of fatty acid production. Possesses both acetoacetyl-ACP synthase and acetyl transacylase activities. Its substrate specificity determines the biosynthesis of branched-chain and/or straight-chain of fatty acids. The chain is Beta-ketoacyl-[acyl-carrier-protein] synthase III from Haemophilus ducreyi (strain 35000HP / ATCC 700724).